The sequence spans 55 residues: Large ribosomal subunit protein bL33 (55 aa).

This sequence belongs to the bacterial ribosomal protein bL33 family.

The sequence is that of Large ribosomal subunit protein bL33 from Erythrobacter litoralis (strain HTCC2594).